Consider the following 1210-residue polypeptide: Epidermal growth factor receptor (1210 aa).

Positions 1-24 (MRPSGTAGAALLALLAALCPASRA) are cleaved as a signal peptide. Topologically, residues 25-645 (LEEKKVCQGT…CPTNGPKIPS (621 aa)) are extracellular. A disulfide bond links cysteine 31 and cysteine 58. Residue asparagine 56 is glycosylated (N-linked (GlcNAc...) (complex) asparagine; atypical; partial). An N-linked (GlcNAc...) asparagine; atypical glycan is attached at asparagine 73. The stretch at 75–300 (DLSFLKTIQE…CVKKCPRNYV (226 aa)) is one Approximate repeat. Residues asparagine 128, asparagine 175, and asparagine 196 are each glycosylated (N-linked (GlcNAc...) asparagine). Cystine bridges form between cysteine 157-cysteine 187, cysteine 190-cysteine 199, cysteine 194-cysteine 207, cysteine 215-cysteine 223, cysteine 219-cysteine 231, cysteine 232-cysteine 240, cysteine 236-cysteine 248, cysteine 251-cysteine 260, cysteine 264-cysteine 291, cysteine 295-cysteine 307, cysteine 311-cysteine 326, cysteine 329-cysteine 333, and cysteine 337-cysteine 362. The residue at position 229 (serine 229) is a Phosphoserine. N-linked (GlcNAc...) asparagine glycosylation is found at asparagine 352, asparagine 361, asparagine 413, and asparagine 444. One copy of the Approximate repeat lies at 390 to 600 (QELDILKTVK…CVKTCPAGVM (211 aa)). Intrachain disulfides connect cysteine 470-cysteine 499, cysteine 506-cysteine 515, cysteine 510-cysteine 523, cysteine 526-cysteine 535, cysteine 539-cysteine 555, cysteine 558-cysteine 571, cysteine 562-cysteine 579, cysteine 582-cysteine 591, cysteine 595-cysteine 617, cysteine 620-cysteine 628, and cysteine 624-cysteine 636. N-linked (GlcNAc...) asparagine glycosylation is present at asparagine 528. A glycan (N-linked (GlcNAc...) asparagine; partial) is linked at asparagine 568. Asparagine 603 carries N-linked (GlcNAc...) asparagine; partial glycosylation. An N-linked (GlcNAc...) (high mannose) asparagine glycan is attached at asparagine 623. A helical membrane pass occupies residues 646-668 (IATGMVGALLLLLVVALGIGLFM). Over 669–1210 (RRRHIVRKRT…APQSSEFIGA (542 aa)) the chain is Cytoplasmic. Position 678 is a phosphothreonine; by PKC and PKD/PRKD1 (threonine 678). Residues 688–704 (LVEPLTPSGEAPNQALL) are important for dimerization, phosphorylation and activation. The residue at position 693 (threonine 693) is a Phosphothreonine; by PKD/PRKD1. Serine 695 bears the Phosphoserine mark. A Protein kinase domain is found at 712–979 (FKKIKVLGSG…KMARDPQRYL (268 aa)). Residue lysine 716 forms a Glycyl lysine isopeptide (Lys-Gly) (interchain with G-Cter in ubiquitin) linkage. An ATP-binding site is contributed by 718-726 (LGSGAFGTV). Lysine 737 participates in a covalent cross-link: Glycyl lysine isopeptide (Lys-Gly) (interchain with G-Cter in ubiquitin). Lysine 745 serves as a coordination point for ATP. Lysine 745 is modified (N6-(2-hydroxyisobutyryl)lysine). Residues lysine 754 and lysine 757 each participate in a glycyl lysine isopeptide (Lys-Gly) (interchain with G-Cter in ubiquitin) cross-link. 790 to 791 (TQ) lines the ATP pocket. Aspartate 837 acts as the Proton acceptor in catalysis. Aspartate 855 is a binding site for ATP. A Glycyl lysine isopeptide (Lys-Gly) (interchain with G-Cter in ubiquitin) cross-link involves residue lysine 867. Position 869 is a phosphotyrosine (tyrosine 869). Glycyl lysine isopeptide (Lys-Gly) (interchain with G-Cter in ubiquitin) cross-links involve residues lysine 929, lysine 960, and lysine 970. A phosphoserine mark is found at serine 991 and serine 995. Residues tyrosine 998 and tyrosine 1016 each carry the phosphotyrosine; by autocatalysis modification. 2 positions are modified to phosphoserine: serine 1026 and serine 1039. Threonine 1041 carries the phosphothreonine modification. Serine 1042 carries the post-translational modification Phosphoserine. Residue cysteine 1049 is the site of S-palmitoyl cysteine attachment. Position 1064 is a phosphoserine (serine 1064). A Phosphotyrosine modification is found at tyrosine 1069. Serine 1070, serine 1071, and serine 1081 each carry phosphoserine. Tyrosine 1092 and tyrosine 1110 each carry phosphotyrosine; by autocatalysis. Residues 1097-1137 (VPKRPAGSVQNPVYHNQPLNPAPSRDPHYQDPHSTAVGNPE) are disordered. 2 stretches are compositionally biased toward polar residues: residues 1104–1115 (SVQNPVYHNQPL) and 1128–1137 (PHSTAVGNPE). Residue cysteine 1146 is the site of S-palmitoyl cysteine attachment. Position 1166 is a phosphoserine (serine 1166). Phosphotyrosine; by autocatalysis is present on residues tyrosine 1172 and tyrosine 1197. Arginine 1199 is subject to Omega-N-methylarginine.

This sequence belongs to the protein kinase superfamily. Tyr protein kinase family. EGF receptor subfamily. As to quaternary structure, binding of the ligand triggers homo- and/or heterodimerization of the receptor triggering its autophosphorylation. Heterodimer with ERBB2. Forms a complex with CCDC88A/GIV (via SH2-like regions) and GNAI3 which leads to enhanced EGFR signaling and triggering of cell migration; binding to CCDC88A requires autophosphorylation of the EGFR C-terminal region, and ligand stimulation is required for recruitment of GNAI3 to the complex. Interacts with ERRFI1; inhibits dimerization of the kinase domain and autophosphorylation. Part of a complex with ERBB2 and either PIK3C2A or PIK3C2B. Interacts with GRB2; an adapter protein coupling the receptor to downstream signaling pathways. Interacts with GAB2; involved in signaling downstream of EGFR. Interacts with STAT3; mediates EGFR downstream signaling in cell proliferation. Interacts with RIPK1; involved in NF-kappa-B activation. Interacts (autophosphorylated) with CBL, CBLB and CBLC; involved in EGFR ubiquitination and regulation; interaction with CBL is reduced in the presence of tensin TNS4. Interacts with SOCS5; regulates EGFR degradation through ELOC- and ELOB-mediated ubiquitination and proteasomal degradation. Interacts with PRMT5; methylates EGFR and enhances interaction with PTPN6. Interacts (phosphorylated) with PTPN6; inhibits EGFR-dependent activation of MAPK/ERK. Interacts with COPG1; essential for regulation of EGF-dependent nuclear transport of EGFR by retrograde trafficking from the Golgi to the ER. Interacts with TNK2; this interaction is dependent on EGF stimulation and kinase activity of EGFR. Interacts with PCNA; positively regulates PCNA. Interacts with PELP1. Interacts with MUC1. Interacts with AP2M1. Interacts with FER. May interact with EPS8; mediates EPS8 phosphorylation. Interacts (via SH2 domains) with GRB2, NCK1 and NCK2. Interacts with ATXN2. Interacts with GAREM1. Interacts (ubiquitinated) with ANKRD13A/B/D; the interaction is direct and may regulate EGFR internalization after EGF stimulation. Interacts with GPER1; the interaction occurs in an estrogen-dependent manner. Interacts (via C-terminal cytoplasmic kinase domain) with ZPR1 (via zinc fingers). Interacts with RNF115 and RNF126. Interacts with GPRC5A (via its transmembrane domain). Interacts with FAM83B; positively regulates EGFR inducing its autophosphorylation in absence of stimulation by EGF. Interacts with LAPTM4B; positively correlates with EGFR activation. Interacts with STX19. Interacts with CD44. Interacts with PGRMC1; the interaction requires PGRMC1 homodimerization. Interacts with PIKFYVE. Interacts with NEU3. Interacts with TRAF4. Interacts with the ant venom OMEGA-myrmeciitoxin(02)-Mg1a. Interacts with CD82; this interaction facilitates ligand-induced endocytosis of the receptor and its subsequent desensitization. Post-translationally, phosphorylated on Tyr residues in response to EGF. Phosphorylation at Ser-695 is partial and occurs only if Thr-693 is phosphorylated. Phosphorylation at Thr-678 and Thr-693 by PRKD1 inhibits EGF-induced MAPK8/JNK1 activation. Dephosphorylation by PTPRJ prevents endocytosis and stabilizes the receptor at the plasma membrane. Autophosphorylation at Tyr-1197 is stimulated by methylation at Arg-1199 and enhances interaction with PTPN6. Autophosphorylation at Tyr-1092 and/or Tyr-1110 recruits STAT3. Dephosphorylated by PTPN1 and PTPN2. Monoubiquitinated and polyubiquitinated upon EGF stimulation; which does not affect tyrosine kinase activity or signaling capacity but may play a role in lysosomal targeting. Polyubiquitin linkage is mainly through 'Lys-63', but linkage through 'Lys-48', 'Lys-11' and 'Lys-29' also occurs. Deubiquitination by OTUD7B prevents degradation. Ubiquitinated by RNF115 and RNF126. Ubiquitinated by ZNRF1 or CBL at different lysines in response to EGF stimulation; leading to recruitment of the ESCRT machinery and subsequent degradation in the lysosomes. Deubiquitinated by UCHL1 leading to the inhibition of its degradation. In terms of processing, palmitoylated on Cys residues by ZDHHC20. Palmitoylation inhibits internalization after ligand binding, and increases the persistence of tyrosine-phosphorylated EGFR at the cell membrane. Palmitoylation increases the amplitude and duration of EGFR signaling. Post-translationally, methylated. Methylation at Arg-1199 by PRMT5 stimulates phosphorylation at Tyr-1197. In terms of tissue distribution, ubiquitously expressed. Isoform 2 is also expressed in ovarian cancers.

It localises to the cell membrane. The protein resides in the endoplasmic reticulum membrane. The protein localises to the golgi apparatus membrane. It is found in the nucleus membrane. Its subcellular location is the endosome. It localises to the endosome membrane. The protein resides in the nucleus. The protein localises to the secreted. The catalysed reaction is L-tyrosyl-[protein] + ATP = O-phospho-L-tyrosyl-[protein] + ADP + H(+). Endocytosis and inhibition of the activated EGFR by phosphatases like PTPRJ and PTPRK constitute immediate regulatory mechanisms. Upon EGF-binding phosphorylates EPS15 that regulates EGFR endocytosis and activity. Moreover, inducible feedback inhibitors including LRIG1, SOCS4, SOCS5 and ERRFI1 constitute alternative regulatory mechanisms for the EGFR signaling. Up-regulated by NEU3-mediated desialylation of N-linked glycan at Asn-528. Functionally, receptor tyrosine kinase binding ligands of the EGF family and activating several signaling cascades to convert extracellular cues into appropriate cellular responses. Known ligands include EGF, TGFA/TGF-alpha, AREG, epigen/EPGN, BTC/betacellulin, epiregulin/EREG and HBEGF/heparin-binding EGF. Ligand binding triggers receptor homo- and/or heterodimerization and autophosphorylation on key cytoplasmic residues. The phosphorylated receptor recruits adapter proteins like GRB2 which in turn activates complex downstream signaling cascades. Activates at least 4 major downstream signaling cascades including the RAS-RAF-MEK-ERK, PI3 kinase-AKT, PLCgamma-PKC and STATs modules. May also activate the NF-kappa-B signaling cascade. Also directly phosphorylates other proteins like RGS16, activating its GTPase activity and probably coupling the EGF receptor signaling to the G protein-coupled receptor signaling. Also phosphorylates MUC1 and increases its interaction with SRC and CTNNB1/beta-catenin. Positively regulates cell migration via interaction with CCDC88A/GIV which retains EGFR at the cell membrane following ligand stimulation, promoting EGFR signaling which triggers cell migration. Plays a role in enhancing learning and memory performance. Plays a role in mammalian pain signaling (long-lasting hypersensitivity). In terms of biological role, isoform 2 may act as an antagonist of EGF action. (Microbial infection) Acts as a receptor for hepatitis C virus (HCV) in hepatocytes and facilitates its cell entry. Mediates HCV entry by promoting the formation of the CD81-CLDN1 receptor complexes that are essential for HCV entry and by enhancing membrane fusion of cells expressing HCV envelope glycoproteins. The polypeptide is Epidermal growth factor receptor (Homo sapiens (Human)).